The sequence spans 142 residues: uncharacterized protein (142 aa).

A run of 3 helical transmembrane segments spans residues 3 to 23 (LIFI…FNLL), 30 to 50 (SVSW…AVWI), and 91 to 111 (FFLL…AYFS).

The protein localises to the membrane. This is an uncharacterized protein from Saccharomyces cerevisiae (strain ATCC 204508 / S288c) (Baker's yeast).